The sequence spans 168 residues: MMLDFKKKKELVTQINLIAKTALSIVVANPQGIKSNDITQLRKLARKSNVKLGVYRNTLLNLGIKNTPFECLKNILIGPTLIAYSSEHPGSAAKLLKNFSMSQSSNPNFKILGAVFEGKAISGSNINSLADIPTFNEALRRFIIIAKEISAGKLLRILVSIKNIKENS.

The protein belongs to the universal ribosomal protein uL10 family. Part of the ribosomal stalk of the 50S ribosomal subunit. The N-terminus interacts with L11 and the large rRNA to form the base of the stalk. The C-terminus forms an elongated spine to which L12 dimers bind in a sequential fashion forming a multimeric L10(L12)X complex.

Its function is as follows. Forms part of the ribosomal stalk, playing a central role in the interaction of the ribosome with GTP-bound translation factors. This is Large ribosomal subunit protein uL10 (rplJ) from Buchnera aphidicola subsp. Baizongia pistaciae (strain Bp).